A 205-amino-acid chain; its full sequence is Nuclear transcription factor Y subunit C-6 (205 aa).

A disordered region spans residues 1–24 (MEPKSTTPPPPPPPPVLGAPVPYP).

The protein belongs to the NFYC/HAP5 subunit family. As to quaternary structure, heterotrimeric transcription factor composed of three components, NF-YA, NF-YB and NF-YC. NF-YB and NF-YC must interact and dimerize for NF-YA association and DNA binding. Interacts with NFYB2. Interacts with NFYB8, NFYB10 and HD5/NFYB11.

The protein localises to the nucleus. It is found in the cytoplasm. Component of the NF-Y/HAP transcription factor complex. The polypeptide is Nuclear transcription factor Y subunit C-6 (Oryza sativa subsp. japonica (Rice)).